The sequence spans 404 residues: Pectate lyase E (404 aa).

An N-terminal signal peptide occupies residues 1 to 41 (MNNSRMSSVSTQKTTGRSALGTKSALAAIIATTMMVSVASA). Ca(2+) contacts are provided by Asp-182 and Asp-225. Arg-278 is an active-site residue.

This sequence belongs to the polysaccharide lyase 1 family. PLBC subfamily. Ca(2+) serves as cofactor.

The protein resides in the secreted. The enzyme catalyses Eliminative cleavage of (1-&gt;4)-alpha-D-galacturonan to give oligosaccharides with 4-deoxy-alpha-D-galact-4-enuronosyl groups at their non-reducing ends.. It functions in the pathway glycan metabolism; pectin degradation; 2-dehydro-3-deoxy-D-gluconate from pectin: step 2/5. Its function is as follows. Involved in maceration and soft-rotting of plant tissue. Pectate lyases have been implicated as pathogenicity factors which induce maceration or rotting of plant tissue. PelE is sufficient to induce these effects under laboratory conditions. The chain is Pectate lyase E (pelE) from Dickeya dadantii (strain 3937) (Erwinia chrysanthemi (strain 3937)).